Here is a 242-residue protein sequence, read N- to C-terminus: Nuclear autoantigen Sp-100 (242 aa).

Residues 1–50 (KKCIQSEDKKWFTPREFEIEGDRRASKNWKLSIRCGGYTLKFLMENKLLP) form the SAND domain. DNA-binding regions (HMG box) lie at residues 51 to 127 (EPPS…KTYI) and 143 to 211 (PKRP…AADR). A Nuclear localization signal motif is present at residues 91–108 (KKCSEMWKTIFAKEKGKF). The tract at residues 205–242 (KDIAADRAKGKPNSAKKRVVKAEKSKKKKEEEEDEVDE) is disordered. The segment covering 218–231 (SAKKRVVKAEKSKK) has biased composition (basic residues).

As to quaternary structure, homodimer. Interacts with members of the HP1 family of nonhistone chromosomal protein, such as CBX5 and CBX3 via the PxVxL motif. Interacts with ETS1; the interaction is direct and modulates ETS1 transcriptional activity. Interacts with the MRN complex which is composed of two heterodimers RAD50/MRE11 associated with a single NBN; recruits the complex to PML-related bodies. Interacts with HIPK2; positively regulates TP53-dependent transcription. Interacts with CASP8AP2; may negatively regulate CASP8AP2 export from the nucleus to the cytoplasm. Post-translationally, sumoylated. Sumoylated with SUMO1. Sumoylation depends on a functional nuclear localization signal but is not necessary for nuclear import or nuclear body targeting. Sumoylation may stabilize the interaction with CBX5. In terms of processing, phosphorylated.

The protein resides in the nucleus. It localises to the PML body. The protein localises to the nuclear body. Its subcellular location is the cytoplasm. Its function is as follows. Together with PML, this tumor suppressor is a major constituent of the PML bodies, a subnuclear organelle involved in a large number of physiological processes including cell growth, differentiation and apoptosis. Functions as a transcriptional coactivator of ETS1 and ETS2. Under certain conditions, it may also act as a corepressor of ETS1 preventing its binding to DNA. Through the regulation of ETS1 it may play a role in angiogenesis, controlling endothelial cell motility and invasion. Through interaction with the MRN complex it may be involved in the regulation of telomeres lengthening. May also regulate TP53-mediated transcription and through CASP8AP2, regulate FAS-mediated apoptosis. May also play a role in infection by viruses through mechanisms that may involve chromatin and/or transcriptional regulation. The polypeptide is Nuclear autoantigen Sp-100 (SP100) (Hylobates lar (Lar gibbon)).